A 72-amino-acid polypeptide reads, in one-letter code: Translation initiation factor IF-1 (72 aa).

The 72-residue stretch at M1–K72 folds into the S1-like domain.

This sequence belongs to the IF-1 family. Component of the 30S ribosomal translation pre-initiation complex which assembles on the 30S ribosome in the order IF-2 and IF-3, IF-1 and N-formylmethionyl-tRNA(fMet); mRNA recruitment can occur at any time during PIC assembly.

Its subcellular location is the cytoplasm. Its function is as follows. One of the essential components for the initiation of protein synthesis. Stabilizes the binding of IF-2 and IF-3 on the 30S subunit to which N-formylmethionyl-tRNA(fMet) subsequently binds. Helps modulate mRNA selection, yielding the 30S pre-initiation complex (PIC). Upon addition of the 50S ribosomal subunit IF-1, IF-2 and IF-3 are released leaving the mature 70S translation initiation complex. This chain is Translation initiation factor IF-1, found in Brucella suis biovar 1 (strain 1330).